A 780-amino-acid chain; its full sequence is GATOR2 complex protein WDR24 (780 aa).

6 WD repeats span residues 67–107, 113–153, 156–196, 200–240, 244–286, and 290–333; these read SLNF…RNKQ, EHKR…SVST, GQSE…RCER, AHNG…AKEI, QTIA…IPFA, and EHKD…IDRA. The C4-type zinc-finger motif lies at 708 to 730; sequence NCSNCKRPMSNKGWICDRCRQCA. Cysteine 709, cysteine 712, cysteine 723, cysteine 726, cysteine 733, cysteine 736, cysteine 747, cysteine 750, histidine 752, histidine 755, histidine 758, cysteine 769, cysteine 773, histidine 775, and cysteine 777 together coordinate Zn(2+). The segment at 731-780 adopts an RING-type; atypical zinc-finger fold; sequence SMCAVCHHVVKGLFVWCQGCCHGGHLQHIMNWMQNNCYCPAGCGHVCEYS.

It belongs to the WD repeat WDR24 family. As to quaternary structure, component of the GATOR2 subcomplex, composed of MIOS, SEC13, SEH1L, WDR24 and WDR59. The GATOR2 complex interacts with CASTOR1 and CASTOR2; the interaction is negatively regulated by arginine. The GATOR2 complex interacts with SESN1, SESN2 and SESN3; the interaction is negatively regulated by amino acids.

It is found in the lysosome membrane. The enzyme catalyses S-ubiquitinyl-[E2 ubiquitin-conjugating enzyme]-L-cysteine + [acceptor protein]-L-lysine = [E2 ubiquitin-conjugating enzyme]-L-cysteine + N(6)-ubiquitinyl-[acceptor protein]-L-lysine.. The protein operates within protein modification; protein ubiquitination. With respect to regulation, the GATOR2 complex is negatively regulated by the upstream amino acid sensors CASTOR1 and SESN2, which sequester the GATOR2 complex in absence of amino acids. In the presence of abundant amino acids, GATOR2 is released from CASTOR1 and SESN2 and activated. Catalytic component of the GATOR2 complex, a multiprotein complex that acts as an activator of the amino acid-sensing branch of the mTORC1 signaling pathway. The GATOR2 complex indirectly activates mTORC1 through the inhibition of the GATOR1 subcomplex. GATOR2 probably acts as an E3 ubiquitin-protein ligase toward GATOR1. In the presence of abundant amino acids, the GATOR2 complex mediates ubiquitination of the NPRL2 core component of the GATOR1 complex, leading to GATOR1 inactivation. In the absence of amino acids, GATOR2 is inhibited, activating the GATOR1 complex. In addition to its role in regulation of the mTORC1 complex, promotes the acidification of lysosomes and facilitates autophagic flux. Within the GATOR2 complex, WDR24 constitutes the catalytic subunit that mediates 'Lys-6'-linked ubiquitination of NPRL2. The polypeptide is GATOR2 complex protein WDR24 (Xenopus laevis (African clawed frog)).